The primary structure comprises 1446 residues: ABC transporter G family member 53 (1446 aa).

The 274-residue stretch at 153–426 folds into the ABC transporter 1 domain; that stretch reads ANTLHITPNR…FESVGFKCPE (274 aa). 186–193 is an ATP binding site; that stretch reads GPPGAGKT. In terms of domain architecture, ABC transmembrane type-2 1 spans 504–717; sequence ELLKANIDRE…AQNAISVNEF (214 aa). 6 helical membrane passes run 523–543, 555–575, 610–630, 641–661, 666–686, and 752–772; these read VYIF…TVFI, GGIY…NGLA, TPLS…VIGF, FLLL…IAGF, VVAS…GGFI, and IGVG…TICL. The 253-residue stretch at 849–1101 folds into the ABC transporter 2 domain; it reads ITFEDIRYSV…ELIRYFESIE (253 aa). 894-901 serves as a coordination point for ATP; sequence GVSGAGKT. Residues 1174–1388 enclose the ABC transmembrane type-2 2 domain; sequence TQCLACLWKQ…TLYGLVTSQF (215 aa). Transmembrane regions (helical) follow at residues 1195–1215, 1225–1242, 1281–1301, 1308–1328, 1338–1358, 1363–1383, and 1415–1435; these read AVKY…FWGV, LFNA…MGVQ, LPYI…MIGF, FFWY…YGMM, VASV…GFII, IPIW…LYGL, and FLWV…FLFG.

This sequence belongs to the ABC transporter superfamily. ABCG family. PDR (TC 3.A.1.205) subfamily.

The protein localises to the membrane. Its function is as follows. May be a general defense protein. This Oryza sativa subsp. japonica (Rice) protein is ABC transporter G family member 53.